Here is a 195-residue protein sequence, read N- to C-terminus: MPVIPYVVESNGREERTYDIYSRLLKDRIIFLGQQVDDQISNALVAQMLFLQADDPKKDIHMYINSPGGSITAGMAIYDTMQFVSCDVATYCIGQAASMGAVLLTAGAKGKRFALPNARIMIHQPLAGMQGTAREVEIHVAELRRIKQRMNEIMIEHTGHSLEKIEEDTDRDRFMSADEACSYGLIDKVVKSVDD.

Catalysis depends on S98, which acts as the Nucleophile. H123 is an active-site residue.

It belongs to the peptidase S14 family. As to quaternary structure, fourteen ClpP subunits assemble into 2 heptameric rings which stack back to back to give a disk-like structure with a central cavity, resembling the structure of eukaryotic proteasomes.

The protein localises to the cytoplasm. It catalyses the reaction Hydrolysis of proteins to small peptides in the presence of ATP and magnesium. alpha-casein is the usual test substrate. In the absence of ATP, only oligopeptides shorter than five residues are hydrolyzed (such as succinyl-Leu-Tyr-|-NHMec, and Leu-Tyr-Leu-|-Tyr-Trp, in which cleavage of the -Tyr-|-Leu- and -Tyr-|-Trp bonds also occurs).. Functionally, cleaves peptides in various proteins in a process that requires ATP hydrolysis. Has a chymotrypsin-like activity. Plays a major role in the degradation of misfolded proteins. The polypeptide is ATP-dependent Clp protease proteolytic subunit 2 (Rhodopirellula baltica (strain DSM 10527 / NCIMB 13988 / SH1)).